A 479-amino-acid polypeptide reads, in one-letter code: Ribosomal RNA small subunit methyltransferase F (479 aa).

Residues 125 to 131, glutamate 149, aspartate 176, and aspartate 194 each bind S-adenosyl-L-methionine; that span reads AAAPGSK. Cysteine 247 acts as the Nucleophile in catalysis.

The protein belongs to the class I-like SAM-binding methyltransferase superfamily. RsmB/NOP family.

The protein resides in the cytoplasm. The enzyme catalyses cytidine(1407) in 16S rRNA + S-adenosyl-L-methionine = 5-methylcytidine(1407) in 16S rRNA + S-adenosyl-L-homocysteine + H(+). Its function is as follows. Specifically methylates the cytosine at position 1407 (m5C1407) of 16S rRNA. This is Ribosomal RNA small subunit methyltransferase F from Escherichia coli O7:K1 (strain IAI39 / ExPEC).